Consider the following 200-residue polypeptide: CASP-like protein 1U2 (200 aa).

At 1–33 (MAEPVIVVPRKGVYSDDSYHHHHRHHSFHSCTN) the chain is on the cytoplasmic side. The helical transmembrane segment at 34–54 (FLLRTLTAGATAAAVVVMLIS) threads the bilayer. At 55–77 (TQTSGTIYGYFRGRWRDYPAYKW) the chain is on the extracellular side. The helical transmembrane segment at 78 to 98 (LIIANAVVFVYSVMAAIVACF) threads the bilayer. Over 99–120 (SVIARRGPLSYSPSAWLTLLVD) the chain is Cytoplasmic. Residues 121 to 141 (FLAASALISAASAALAVALLA) traverse the membrane as a helical segment. The Extracellular portion of the chain corresponds to 142–168 (RNGQDLQGTHYWPTVCNYVSKFCDYTQ). The helical transmembrane segment at 169 to 189 (GAIIASFVGFGLLFLSTLLAA) threads the bilayer. Residues 190 to 200 (SALYHLSHRRH) are Cytoplasmic-facing.

It belongs to the Casparian strip membrane proteins (CASP) family. In terms of assembly, homodimer and heterodimers.

Its subcellular location is the cell membrane. The polypeptide is CASP-like protein 1U2 (Physcomitrium patens (Spreading-leaved earth moss)).